Here is an 82-residue protein sequence, read N- to C-terminus: ETGEELYKTKGCTVCHAIDSKLVGPSFKEVTAKYAGQAGIADTLAAKIKAGGSGNWGQIPMPPNPVSEAEAKTLAEWVLTHK.

Residues Cys-12, Cys-15, His-16, and Met-61 each coordinate heme c.

Binds 1 heme c group covalently per subunit.

This Azotobacter vinelandii protein is Cytochrome c-551.